A 402-amino-acid chain; its full sequence is Protein HAIKU1 (402 aa).

Disordered regions lie at residues 1-44, 63-135, 160-266, and 346-402; these read MDRP…LQTQ, TGSP…QQPM, SSLG…LVPS, and QPLT…WNDY. Positions 24–44 are enriched in polar residues; sequence LHQSTFAASTSNGAAPRLQTQ. A VQ motif is present at residues 55 to 64; sequence FRSIVQQLTG. The segment covering 76–87 has biased composition (polar residues); that stretch reads QNNSLRPQNTRL. Positions 103–113 are enriched in pro residues; the sequence is VPLPSMAPPQS. Over residues 160 to 173 the composition is skewed to polar residues; that stretch reads SSLGDSGPNANQMQ. Residues 218–240 show a composition bias toward low complexity; it reads MPAQSQSQSQPQPQPQPQQHMMP. Positions 257–266 are enriched in pro residues; sequence YLPPPGLVPS. A compositionally biased stretch (polar residues) spans 349 to 358; the sequence is TPNFSFSQIA. A compositionally biased stretch (pro residues) spans 371–380; that stretch reads QGPPQPPPSP. Over residues 381–390 the composition is skewed to low complexity; the sequence is GLMFPLSPSG.

In terms of assembly, interacts with WRKY10. Interacts with MPK6.

Its subcellular location is the nucleus. Its function is as follows. Modulates seed size by negatively regulating the cellularization of syncytial endosperm. May function by binding and modulating the activity of WRKY10 transcription factor. This is Protein HAIKU1 from Arabidopsis thaliana (Mouse-ear cress).